Reading from the N-terminus, the 952-residue chain is Protein translocase subunit SecA (952 aa).

ATP-binding positions include Q104, 122–126, and D512; that span reads GEGKT.

Belongs to the SecA family. In terms of assembly, monomer and homodimer. Part of the essential Sec protein translocation apparatus which comprises SecA, SecYEG and auxiliary proteins SecDF. Other proteins may also be involved.

Its subcellular location is the cell inner membrane. The protein resides in the cytoplasm. It catalyses the reaction ATP + H2O + cellular proteinSide 1 = ADP + phosphate + cellular proteinSide 2.. Its function is as follows. Part of the Sec protein translocase complex. Interacts with the SecYEG preprotein conducting channel. Has a central role in coupling the hydrolysis of ATP to the transfer of proteins into and across the cell membrane, serving as an ATP-driven molecular motor driving the stepwise translocation of polypeptide chains across the membrane. The protein is Protein translocase subunit SecA of Gloeobacter violaceus (strain ATCC 29082 / PCC 7421).